The primary structure comprises 130 residues: Large ribosomal subunit protein bL17 (130 aa).

The protein belongs to the bacterial ribosomal protein bL17 family. Part of the 50S ribosomal subunit. Contacts protein L32.

This chain is Large ribosomal subunit protein bL17, found in Shewanella pealeana (strain ATCC 700345 / ANG-SQ1).